The primary structure comprises 759 residues: Multifunctional tryptophan biosynthesis protein (759 aa).

The Glutamine amidotransferase type-1 domain maps to Pro-27–Glu-223. L-glutamine is bound at residue Gly-80–Gly-82. Cys-108 functions as the Nucleophile; for GATase activity in the catalytic mechanism. Residues Gln-112 and Ser-158 to Leu-159 each bind L-glutamine. Catalysis depends on for GATase activity residues His-197 and Glu-199. Residues Ile-257–Leu-519 form an indole-3-glycerol phosphate synthase region. The interval Leu-536–Leu-759 is N-(5'-phosphoribosyl)anthranilate isomerase.

The enzyme catalyses N-(5-phospho-beta-D-ribosyl)anthranilate = 1-(2-carboxyphenylamino)-1-deoxy-D-ribulose 5-phosphate. It catalyses the reaction 1-(2-carboxyphenylamino)-1-deoxy-D-ribulose 5-phosphate + H(+) = (1S,2R)-1-C-(indol-3-yl)glycerol 3-phosphate + CO2 + H2O. The catalysed reaction is chorismate + L-glutamine = anthranilate + pyruvate + L-glutamate + H(+). Its pathway is amino-acid biosynthesis; L-tryptophan biosynthesis; L-tryptophan from chorismate: step 1/5. It participates in amino-acid biosynthesis; L-tryptophan biosynthesis; L-tryptophan from chorismate: step 3/5. The protein operates within amino-acid biosynthesis; L-tryptophan biosynthesis; L-tryptophan from chorismate: step 4/5. Trifunctional enzyme bearing the Gln amidotransferase (GATase) domain of anthranilate synthase, indole-glycerolphosphate synthase, and phosphoribosylanthranilate isomerase activities. This Schizosaccharomyces pombe (strain 972 / ATCC 24843) (Fission yeast) protein is Multifunctional tryptophan biosynthesis protein (trp1).